Reading from the N-terminus, the 509-residue chain is Zinc finger protein CKR1 (509 aa).

Residues 1-61 (MEPYVLLDPR…GSEEPQTHPP (61 aa)) form the KRAB domain. Basic and acidic residues-rich tracts occupy residues 41–50 (EDAVGLKEDA) and 98–112 (PKRD…RDRP). A disordered region spans residues 41-114 (EDAVGLKEDA…PSRVRDRPFG (74 aa)). 11 consecutive C2H2-type zinc fingers follow at residues 113 to 135 (FGCP…RRVH), 141 to 163 (YSCP…RRTH), 169 to 191 (HKCQ…SRGH), 197 to 219 (HRCG…RRVH), 225 to 247 (YECP…RRSH), 279 to 303 (QRCA…ERSH), 303 to 325 (HRCG…RRVH), 331 to 353 (FPCG…GKTH), 359 to 383 (YKCG…GHAA), 387 to 409 (FTCG…RRVH), and 415 to 437 (YECP…RRSH). The disordered stretch occupies residues 428–479 (SHLTKHRRSHGPKAPLLPVQGRGEAGEPLRASPLSSGAEQRDGRRAQRGGVE).

This sequence belongs to the krueppel C2H2-type zinc-finger protein family.

It is found in the nucleus. This Gallus gallus (Chicken) protein is Zinc finger protein CKR1.